A 126-amino-acid polypeptide reads, in one-letter code: Urease subunit beta (126 aa).

This sequence belongs to the urease beta subunit family. Heterotrimer of UreA (gamma), UreB (beta) and UreC (alpha) subunits. Three heterotrimers associate to form the active enzyme.

It localises to the cytoplasm. It carries out the reaction urea + 2 H2O + H(+) = hydrogencarbonate + 2 NH4(+). The protein operates within nitrogen metabolism; urea degradation; CO(2) and NH(3) from urea (urease route): step 1/1. The protein is Urease subunit beta of Haloquadratum walsbyi (strain DSM 16790 / HBSQ001).